A 92-amino-acid chain; its full sequence is MARSLKKGPFIDDHLMKKITKLNSEGKKTPFKSWSRRSTIYPDMIGHTVMIHNGKAFVPVYVNENMIGHKLGEFAPTRTFKGHGGDKKVAKK.

It belongs to the universal ribosomal protein uS19 family.

Functionally, protein S19 forms a complex with S13 that binds strongly to the 16S ribosomal RNA. In Leptospira biflexa serovar Patoc (strain Patoc 1 / Ames), this protein is Small ribosomal subunit protein uS19.